We begin with the raw amino-acid sequence, 437 residues long: Endoplasmic reticulum protein SC65 (437 aa).

The first 18 residues, 1–18, serve as a signal peptide directing secretion; that stretch reads MARVAWGLLWLLLGSAGA. A glycan (N-linked (GlcNAc...) asparagine) is linked at asparagine 361. 2 stretches are compositionally biased toward acidic residues: residues 381 to 413 and 428 to 437; these read DEMELEETEPPLEPEDALSDAEFEGEGDYEEGM and AEAEPEPELA. The interval 381–437 is disordered; the sequence is DEMELEETEPPLEPEDALSDAEFEGEGDYEEGMYADWWQEPDAKGDEAEAEPEPELA.

It belongs to the leprecan family. In terms of assembly, interacts with PLOD1, P3H3 and PPIB. Identified in a complex with PLOD1 and P3H3. In terms of tissue distribution, detected in fibroblasts (at protein level). Detected in spleen, prostate, testis, ovary, colon, pancreas, kidney, placenta and heart.

Its subcellular location is the endoplasmic reticulum. Its function is as follows. Part of a complex composed of PLOD1, P3H3 and P3H4 that catalyzes hydroxylation of lysine residues in collagen alpha chains and is required for normal assembly and cross-linking of collagen fibrils. Required for normal bone density and normal skin stability via its role in hydroxylation of lysine residues in collagen alpha chains and in collagen fibril assembly. The sequence is that of Endoplasmic reticulum protein SC65 from Homo sapiens (Human).